Consider the following 1167-residue polypeptide: White collar 1 protein (1167 aa).

Disordered stretches follow at residues 1–91 (MNNN…MSGG) and 307–355 (STPA…GASQ). Over residues 21–57 (QHQQQQQQQQQQQQQQQQQQQQQQQQQQQQHQHQQQQ) the composition is skewed to low complexity. Composition is skewed to polar residues over residues 70-91 (TPPTTNQGNSTIHASDVTMSGG) and 307-325 (STPATTFQSPSLSATTQTI). The segment covering 335-348 (VTNAPTPAPFTSTP) has biased composition (low complexity). One can recognise a PAS 1 domain in the interval 381 to 452 (KLKLGAVDMS…KREFVENNAV (72 aa)). S-4a-FMN cysteine is present on Cys428. Positions 469–508 (LINYRKGGKPFLNLLTMIPIPWDTEEIRYFIGFQIDLVEC) constitute a PAC 1 domain. The 71-residue stretch at 574 to 644 (KQSWDKMLLE…RELKEAQQHT (71 aa)) folds into the PAS 2 domain. The PAC 2 domain occupies 650–691 (FRIRRKNSGYTWFESHGTLFNEQGKGRKCIILVGRKRPVFAL). The region spanning 693-763 (RKDLELNGGI…RTIEKARKGK (71 aa)) is the PAS 3 domain. Low complexity predominate over residues 849–861 (MSKSGSSDSTGAM). 4 disordered regions span residues 849 to 872 (MSKSGSSDSTGAMVSARSSAGPGQ), 918 to 952 (KKKRKRRKGGGNMVRDCANCHTRNTPEWRRGPSGN), 966 to 1047 (QTGR…TGST), and 1060 to 1167 (VNAL…GLSV). A GATA-type zinc finger spans residues 934–959 (CANCHTRNTPEWRRGPSGNRDLCNSC). Residues 968-977 (GRVSPRTSSR) show a composition bias toward polar residues. Low complexity predominate over residues 986–995 (KKSNSPSHSS). Positions 1004 to 1033 (DSPSTTTATKNSPSLRGSSTTAPGTITTDS) are enriched in polar residues. 2 stretches are compositionally biased toward low complexity: residues 1036–1047 (AVASSASGTGST) and 1104–1128 (QHQQQHQQQHQQQHQQQHQQLQQHQ).

Heterodimer of wc-1 and wc-2. FMN binds covalently to cysteine after exposure to blue light and is reversed in the dark.

The protein localises to the nucleus. Functionally, may function as a transcription factor involved in light regulation. Binds and affects blue light regulation of the al-3 gene. Wc-1 and wc-2 proteins interact via homologous PAS domains, bind to promoters of light regulated genes such as frq, and activate transcription. In Neurospora crassa (strain ATCC 24698 / 74-OR23-1A / CBS 708.71 / DSM 1257 / FGSC 987), this protein is White collar 1 protein (wc-1).